The primary structure comprises 64 residues: Large ribosomal subunit protein uL30 (64 aa).

Residues 1–22 form a disordered region; that stretch reads MAKAAKTIKVEQTRSAIRRQHS.

Belongs to the universal ribosomal protein uL30 family. Part of the 50S ribosomal subunit.

This Nitrobacter hamburgensis (strain DSM 10229 / NCIMB 13809 / X14) protein is Large ribosomal subunit protein uL30.